We begin with the raw amino-acid sequence, 229 residues long: Large ribosomal subunit protein uL1 (229 aa).

It belongs to the universal ribosomal protein uL1 family. As to quaternary structure, part of the 50S ribosomal subunit.

Its function is as follows. Binds directly to 23S rRNA. The L1 stalk is quite mobile in the ribosome, and is involved in E site tRNA release. Protein L1 is also a translational repressor protein, it controls the translation of the L11 operon by binding to its mRNA. This chain is Large ribosomal subunit protein uL1, found in Clostridium botulinum (strain ATCC 19397 / Type A).